The primary structure comprises 258 residues: UPF0246 protein Sden_2729 (258 aa).

Belongs to the UPF0246 family.

In Shewanella denitrificans (strain OS217 / ATCC BAA-1090 / DSM 15013), this protein is UPF0246 protein Sden_2729.